The following is a 99-amino-acid chain: Aspartyl/glutamyl-tRNA(Asn/Gln) amidotransferase subunit C (99 aa).

This sequence belongs to the GatC family. As to quaternary structure, heterotrimer of A, B and C subunits.

It catalyses the reaction L-glutamyl-tRNA(Gln) + L-glutamine + ATP + H2O = L-glutaminyl-tRNA(Gln) + L-glutamate + ADP + phosphate + H(+). It carries out the reaction L-aspartyl-tRNA(Asn) + L-glutamine + ATP + H2O = L-asparaginyl-tRNA(Asn) + L-glutamate + ADP + phosphate + 2 H(+). Its function is as follows. Allows the formation of correctly charged Asn-tRNA(Asn) or Gln-tRNA(Gln) through the transamidation of misacylated Asp-tRNA(Asn) or Glu-tRNA(Gln) in organisms which lack either or both of asparaginyl-tRNA or glutaminyl-tRNA synthetases. The reaction takes place in the presence of glutamine and ATP through an activated phospho-Asp-tRNA(Asn) or phospho-Glu-tRNA(Gln). The protein is Aspartyl/glutamyl-tRNA(Asn/Gln) amidotransferase subunit C of Sulfurihydrogenibium sp. (strain YO3AOP1).